We begin with the raw amino-acid sequence, 205 residues long: Large ribosomal subunit protein uL4 (205 aa).

The segment at 65-99 (RQKGTGGARHGSRKSPTFRHGGVYKGPTPRSHGHD) is disordered.

It belongs to the universal ribosomal protein uL4 family. As to quaternary structure, part of the 50S ribosomal subunit.

One of the primary rRNA binding proteins, this protein initially binds near the 5'-end of the 23S rRNA. It is important during the early stages of 50S assembly. It makes multiple contacts with different domains of the 23S rRNA in the assembled 50S subunit and ribosome. Functionally, forms part of the polypeptide exit tunnel. The protein is Large ribosomal subunit protein uL4 of Ruegeria pomeroyi (strain ATCC 700808 / DSM 15171 / DSS-3) (Silicibacter pomeroyi).